We begin with the raw amino-acid sequence, 416 residues long: Serine hydroxymethyltransferase (416 aa).

(6S)-5,6,7,8-tetrahydrofolate is bound by residues leucine 121 and 125 to 127; that span reads GHL. Position 229 is an N6-(pyridoxal phosphate)lysine (lysine 229).

Belongs to the SHMT family. As to quaternary structure, homodimer. Pyridoxal 5'-phosphate serves as cofactor.

The protein resides in the cytoplasm. It catalyses the reaction (6R)-5,10-methylene-5,6,7,8-tetrahydrofolate + glycine + H2O = (6S)-5,6,7,8-tetrahydrofolate + L-serine. The protein operates within one-carbon metabolism; tetrahydrofolate interconversion. It participates in amino-acid biosynthesis; glycine biosynthesis; glycine from L-serine: step 1/1. Its function is as follows. Catalyzes the reversible interconversion of serine and glycine with tetrahydrofolate (THF) serving as the one-carbon carrier. This reaction serves as the major source of one-carbon groups required for the biosynthesis of purines, thymidylate, methionine, and other important biomolecules. Also exhibits THF-independent aldolase activity toward beta-hydroxyamino acids, producing glycine and aldehydes, via a retro-aldol mechanism. In Neisseria meningitidis serogroup B (strain ATCC BAA-335 / MC58), this protein is Serine hydroxymethyltransferase.